We begin with the raw amino-acid sequence, 69 residues long: Conotoxin Gla-TxXI (69 aa).

Positions 1–25 (MVRVTSVGCFLLVIVSLNLVVLTNA) are cleaved as a signal peptide. Cystine bridges form between Cys26-Cys40, Cys33-Cys45, Cys39-Cys49, and Cys44-Cys53. Glu29 carries the post-translational modification 4-carboxyglutamate. At Pro56 the chain carries Proline amide. Positions 60-69 (AKLLEFFRQR) are excised as a propeptide.

In terms of processing, contains 4 disulfide bonds. Expressed by the venom duct.

The protein resides in the secreted. This chain is Conotoxin Gla-TxXI, found in Conus textile (Cloth-of-gold cone).